The primary structure comprises 198 residues: Glycerol-3-phosphate acyltransferase (198 aa).

The next 6 membrane-spanning stretches (helical) occupy residues tyrosine 5–isoleucine 25, valine 55–phenylalanine 75, glycine 79–leucine 99, valine 114–valine 134, tyrosine 139–isoleucine 159, and tyrosine 164–isoleucine 184.

Belongs to the PlsY family. In terms of assembly, probably interacts with PlsX.

It is found in the cell membrane. The enzyme catalyses an acyl phosphate + sn-glycerol 3-phosphate = a 1-acyl-sn-glycero-3-phosphate + phosphate. The protein operates within lipid metabolism; phospholipid metabolism. In terms of biological role, catalyzes the transfer of an acyl group from acyl-phosphate (acyl-PO(4)) to glycerol-3-phosphate (G3P) to form lysophosphatidic acid (LPA). This enzyme utilizes acyl-phosphate as fatty acyl donor, but not acyl-CoA or acyl-ACP. This chain is Glycerol-3-phosphate acyltransferase, found in Finegoldia magna (strain ATCC 29328 / DSM 20472 / WAL 2508) (Peptostreptococcus magnus).